Consider the following 699-residue polypeptide: Elongation factor G 1 (699 aa).

A tr-type G domain is found at 8–290; that stretch reads ERYRNIGICA…AVIEYLPSPT (283 aa). Residues 17-24, 88-92, and 142-145 contribute to the GTP site; these read AHVDAGKT, DTPGH, and NKMD.

It belongs to the TRAFAC class translation factor GTPase superfamily. Classic translation factor GTPase family. EF-G/EF-2 subfamily.

Its subcellular location is the cytoplasm. Catalyzes the GTP-dependent ribosomal translocation step during translation elongation. During this step, the ribosome changes from the pre-translocational (PRE) to the post-translocational (POST) state as the newly formed A-site-bound peptidyl-tRNA and P-site-bound deacylated tRNA move to the P and E sites, respectively. Catalyzes the coordinated movement of the two tRNA molecules, the mRNA and conformational changes in the ribosome. This chain is Elongation factor G 1, found in Hahella chejuensis (strain KCTC 2396).